Here is a 659-residue protein sequence, read N- to C-terminus: Biosynthetic arginine decarboxylase (659 aa).

The residue at position 128 (K128) is an N6-(pyridoxal phosphate)lysine. 308–318 (FDVGGGLGVDY) contributes to the substrate binding site.

The protein belongs to the Orn/Lys/Arg decarboxylase class-II family. SpeA subfamily. Mg(2+) is required as a cofactor. Pyridoxal 5'-phosphate serves as cofactor.

It catalyses the reaction L-arginine + H(+) = agmatine + CO2. The protein operates within amine and polyamine biosynthesis; agmatine biosynthesis; agmatine from L-arginine: step 1/1. In terms of biological role, catalyzes the biosynthesis of agmatine from arginine. This Yersinia pestis protein is Biosynthetic arginine decarboxylase.